Consider the following 89-residue polypeptide: MAISQAKKNEIIKQYARHEGDTGSTEVQVAVLTADINEINVHMQEHRKDFHSQRGLMKKIGHRRNLLAYLRKTDVQRYRELIKSLGLRR.

The protein belongs to the universal ribosomal protein uS15 family. As to quaternary structure, part of the 30S ribosomal subunit. Forms a bridge to the 50S subunit in the 70S ribosome, contacting the 23S rRNA.

One of the primary rRNA binding proteins, it binds directly to 16S rRNA where it helps nucleate assembly of the platform of the 30S subunit by binding and bridging several RNA helices of the 16S rRNA. In terms of biological role, forms an intersubunit bridge (bridge B4) with the 23S rRNA of the 50S subunit in the ribosome. This Levilactobacillus brevis (strain ATCC 367 / BCRC 12310 / CIP 105137 / JCM 1170 / LMG 11437 / NCIMB 947 / NCTC 947) (Lactobacillus brevis) protein is Small ribosomal subunit protein uS15.